The chain runs to 77 residues: uncharacterized protein (77 aa).

This is an uncharacterized protein from Escherichia coli (strain K12).